Consider the following 257-residue polypeptide: 3-methyl-2-oxobutanoate hydroxymethyltransferase (257 aa).

Positions 42 and 86 each coordinate Mg(2+). Residues 42–43 (DS), Asp86, and Lys116 each bind 3-methyl-2-oxobutanoate. Residue Glu118 coordinates Mg(2+). Catalysis depends on Glu185, which acts as the Proton acceptor.

Belongs to the PanB family. In terms of assembly, homodecamer; pentamer of dimers. Requires Mg(2+) as cofactor.

It is found in the cytoplasm. The catalysed reaction is 3-methyl-2-oxobutanoate + (6R)-5,10-methylene-5,6,7,8-tetrahydrofolate + H2O = 2-dehydropantoate + (6S)-5,6,7,8-tetrahydrofolate. It participates in cofactor biosynthesis; (R)-pantothenate biosynthesis; (R)-pantoate from 3-methyl-2-oxobutanoate: step 1/2. Functionally, catalyzes the reversible reaction in which hydroxymethyl group from 5,10-methylenetetrahydrofolate is transferred onto alpha-ketoisovalerate to form ketopantoate. In Prochlorococcus marinus (strain MIT 9515), this protein is 3-methyl-2-oxobutanoate hydroxymethyltransferase.